A 460-amino-acid polypeptide reads, in one-letter code: Glycogen synthase (460 aa).

Lys15 lines the ADP-alpha-D-glucose pocket.

The protein belongs to the glycosyltransferase 1 family. Bacterial/plant glycogen synthase subfamily.

It carries out the reaction [(1-&gt;4)-alpha-D-glucosyl](n) + ADP-alpha-D-glucose = [(1-&gt;4)-alpha-D-glucosyl](n+1) + ADP + H(+). Its pathway is glycan biosynthesis; glycogen biosynthesis. Synthesizes alpha-1,4-glucan chains using ADP-glucose. This is Glycogen synthase from Trichodesmium erythraeum (strain IMS101).